Reading from the N-terminus, the 224-residue chain is Uracil-DNA glycosylase (224 aa).

Residue Asp-61 is the Proton acceptor of the active site.

This sequence belongs to the uracil-DNA glycosylase (UDG) superfamily. UNG family.

The protein localises to the cytoplasm. It catalyses the reaction Hydrolyzes single-stranded DNA or mismatched double-stranded DNA and polynucleotides, releasing free uracil.. Functionally, excises uracil residues from the DNA which can arise as a result of misincorporation of dUMP residues by DNA polymerase or due to deamination of cytosine. The sequence is that of Uracil-DNA glycosylase from Mannheimia succiniciproducens (strain KCTC 0769BP / MBEL55E).